A 303-amino-acid chain; its full sequence is MNKTSDLRIIVLGAAAGGGLPQWNCGCRNCAMARDPASGLRPQTQSSLAVSLDGESWTVFNASPDIRQQVQDNCPLQPRRLRHSPIESVVLTNGDIDHLAGLLVLREKQAFTLFSTGAVGRIVSDNPVFQVLDPELVSRKTIEIDEAFSPLSGLDARLFAVPGKVPLFLEDGEPDLGIEGEHTVGLELEATGRRVYYVPGCAMMTDSLAARLRDADAVFFDGTLFSDDEMILTGTGRKTGRRMGHMPIDGEGGSLDALDLLNIRRKIYVHINNTNPIWRAGSERERVEARGFEIGYDGMEVRL.

The protein belongs to the PqqB family.

It functions in the pathway cofactor biosynthesis; pyrroloquinoline quinone biosynthesis. Functionally, may be involved in the transport of PQQ or its precursor to the periplasm. The sequence is that of Coenzyme PQQ synthesis protein B from Rhizobium meliloti (strain 1021) (Ensifer meliloti).